Consider the following 277-residue polypeptide: Release factor glutamine methyltransferase (277 aa).

S-adenosyl-L-methionine is bound by residues Gly-117 to Gly-121, Asp-140, Trp-168, and Asn-182. Asn-182–Tyr-185 lines the substrate pocket.

This sequence belongs to the protein N5-glutamine methyltransferase family. PrmC subfamily.

It carries out the reaction L-glutaminyl-[peptide chain release factor] + S-adenosyl-L-methionine = N(5)-methyl-L-glutaminyl-[peptide chain release factor] + S-adenosyl-L-homocysteine + H(+). Its function is as follows. Methylates the class 1 translation termination release factors RF1/PrfA and RF2/PrfB on the glutamine residue of the universally conserved GGQ motif. The protein is Release factor glutamine methyltransferase of Buchnera aphidicola subsp. Acyrthosiphon pisum (strain APS) (Acyrthosiphon pisum symbiotic bacterium).